We begin with the raw amino-acid sequence, 554 residues long: Trichloroethene reductive dehalogenase (554 aa).

A signal peptide (tat-type signal) is located at residues 1-42; sequence MSEKYHSTVTRRDFMKRLGLAGAGAGALGAAVLAENNLPHEF. 4Fe-4S ferredoxin-type domains are found at residues 425–457 and 471–500; these read PTKP…HEGP and EGWH…NNSW. The [4Fe-4S] cluster site is built by Cys437, Cys440, Cys443, Cys447, Cys480, Cys483, Cys486, and Cys490.

Belongs to the PceA family. [4Fe-4S] cluster serves as cofactor. The cofactor is corrinoid. In terms of processing, predicted to be exported by the Tat system. The position of the signal peptide cleavage has been experimentally proven.

It localises to the cell membrane. It carries out the reaction trichloroethene + AH2 = (Z)-1,2-dichloroethene + chloride + A + H(+). It catalyses the reaction (Z)-1,2-dichloroethene + AH2 = chloroethene + chloride + A + H(+). The catalysed reaction is 1,1-dichloroethene + AH2 = chloroethene + chloride + A + H(+). Its activity is regulated as follows. Loses 93% of its activity upon incubation with 1-iodopropane and titanium(III) citrate in the dark. Subsequent exposure to light restores 80% of the original activity. Completely inhibited by 2 mM sodium sulfite or sodium dithionite, and by 1 mM cuprous chloride. In terms of biological role, catalyzes the reductive dechlorination of trichloroethene (TCE) to cis-1,2-dichloroethene (DCE) and of cis-1,2-dichloroethene to chloroethene. The substrate specificity is broad, and the enzyme can dehalogenate various substrates, including 1,1-dichloroethene (1,1-DCE), 1,2-dichloroethane and 1,2-dibromoethane. A variety of other haloalkanes and haloalkenes containing three to five carbon atoms are dehalogenated at lower rates. Trans-1,2-dichloroethene (trans-DCE) and chloroethene are degraded at rates which are approximately 2 orders of magnitude lower. Titanium(III) citrate and methyl viologen can be used as reductants. This chain is Trichloroethene reductive dehalogenase, found in Dehalococcoides mccartyi (strain ATCC BAA-2266 / KCTC 15142 / 195) (Dehalococcoides ethenogenes (strain 195)).